We begin with the raw amino-acid sequence, 190 residues long: dCTP deaminase (190 aa).

113–118 (KSTYAR) provides a ligand contact to dCTP. Catalysis depends on E139, which acts as the Proton donor/acceptor. Residues Q158, Y172, K181, and Q182 each contribute to the dCTP site.

Belongs to the dCTP deaminase family. In terms of assembly, homotrimer.

It carries out the reaction dCTP + H2O + H(+) = dUTP + NH4(+). It participates in pyrimidine metabolism; dUMP biosynthesis; dUMP from dCTP (dUTP route): step 1/2. Functionally, catalyzes the deamination of dCTP to dUTP. The protein is dCTP deaminase of Chlamydia muridarum (strain MoPn / Nigg).